We begin with the raw amino-acid sequence, 333 residues long: MNMPIEVLMPIILLALALILISVVFTFIPVGLWISALAAGVNVGIFTLVGMRLRRVTPSRIVNPLIKAHKAGLRVTTAQLEAHYLAGGNVDRVVNALIAAERAAIPLQFERAAAIDLAGRDVLEAVQMSVNPKVIETPVVSAVAKNGIELRVKARVTVRANIDRLVGGAGEETIIARVGEGIVTSIGSSLSHEKVLENPDMVSRTVLAKGLDSGTAFEILSIDIADVDVGKNIGAQLQTDQAEADKRIAQAKAEERRAMAVAKEQEMIAYVQEMRAKVVEAESEVPRALAEALKEGKLGVMDYYTMQNIMADTSMRDNIARSSNSNTDSNPKK.

2 helical membrane passes run 8 to 28 (LMPI…FTFI) and 30 to 50 (VGLW…TLVG).

The protein belongs to the flotillin-like FloA family. As to quaternary structure, homooligomerizes.

The protein resides in the cell membrane. The protein localises to the membrane raft. In terms of biological role, found in functional membrane microdomains (FMM) that may be equivalent to eukaryotic membrane rafts. FMMs are highly dynamic and increase in number as cells age. Flotillins are thought to be important factors in membrane fluidity. This chain is Flotillin-like protein FloA, found in Desulfitobacterium hafniense (strain DSM 10664 / DCB-2).